Here is a 289-residue protein sequence, read N- to C-terminus: Poly-beta-1,6-N-acetyl-D-glucosamine N-deacetylase (289 aa).

An N-terminal signal peptide occupies residues 1 to 30; sequence MKPFKLIFISALMILIMTNATPISHLNAQA. Positions 113-289 constitute a NodB homology domain; that stretch reads RSVWINFDDM…KEWDGFDEEK (177 aa).

Belongs to the polysaccharide deacetylase family.

The protein localises to the secreted. Its subcellular location is the cell wall. In terms of biological role, catalyzes the N-deacetylation of poly-beta-1,6-N-acetyl-D-glucosamine (PNAG, also referred to as PIA), a biofilm adhesin polysaccharide. In fact, the IcaB deacetylase converts 15 to 20% of the GlcNAc residues of PNAG to glucosamine. N-deacetylation is crucial for attachment of the polysaccharide to the bacterial cell surface; it leads to the introduction of positive charges in the otherwise neutral PIA polymer, allowing electrostatic interactions. Deacetylation of the polymer is also essential for key virulence mechanisms of S.epidermidis, namely biofilm formation, colonization, and resistance to neutrophil phagocytosis and human antibacterial peptides. This chain is Poly-beta-1,6-N-acetyl-D-glucosamine N-deacetylase (icaB), found in Staphylococcus epidermidis (strain ATCC 35984 / DSM 28319 / BCRC 17069 / CCUG 31568 / BM 3577 / RP62A).